We begin with the raw amino-acid sequence, 956 residues long: UvrABC system protein A (956 aa).

Glycine 33–serine 40 is an ATP binding site. Residues cysteine 252–cysteine 279 form a C4-type zinc finger. ABC transporter domains are found at residues tryptophan 309–isoleucine 587 and glycine 607–lysine 936. ATP is bound at residue glycine 639–serine 646. A C4-type zinc finger spans residues cysteine 738 to cysteine 764.

Belongs to the ABC transporter superfamily. UvrA family. As to quaternary structure, forms a heterotetramer with UvrB during the search for lesions.

The protein resides in the cytoplasm. Its function is as follows. The UvrABC repair system catalyzes the recognition and processing of DNA lesions. UvrA is an ATPase and a DNA-binding protein. A damage recognition complex composed of 2 UvrA and 2 UvrB subunits scans DNA for abnormalities. When the presence of a lesion has been verified by UvrB, the UvrA molecules dissociate. In Listeria monocytogenes serotype 4b (strain F2365), this protein is UvrABC system protein A.